Consider the following 151-residue polypeptide: Transcriptional repressor NrdR (151 aa).

A zinc finger lies at 3 to 34 (CPYCGYIEDRVIDSRPTDEGSAIRRRRECSKC). The ATP-cone domain occupies 49-139 (IMVIKKDKSR…VYRQFKDINT (91 aa)).

It belongs to the NrdR family. The cofactor is Zn(2+).

In terms of biological role, negatively regulates transcription of bacterial ribonucleotide reductase nrd genes and operons by binding to NrdR-boxes. The sequence is that of Transcriptional repressor NrdR from Acetivibrio thermocellus (strain ATCC 27405 / DSM 1237 / JCM 9322 / NBRC 103400 / NCIMB 10682 / NRRL B-4536 / VPI 7372) (Clostridium thermocellum).